The chain runs to 899 residues: Alanine--tRNA ligase (899 aa).

H595, H599, C703, and H707 together coordinate Zn(2+).

The protein belongs to the class-II aminoacyl-tRNA synthetase family. It depends on Zn(2+) as a cofactor.

It localises to the cytoplasm. The catalysed reaction is tRNA(Ala) + L-alanine + ATP = L-alanyl-tRNA(Ala) + AMP + diphosphate. In terms of biological role, catalyzes the attachment of alanine to tRNA(Ala) in a two-step reaction: alanine is first activated by ATP to form Ala-AMP and then transferred to the acceptor end of tRNA(Ala). Also edits incorrectly charged Ser-tRNA(Ala) and Gly-tRNA(Ala) via its editing domain. The protein is Alanine--tRNA ligase of Caldivirga maquilingensis (strain ATCC 700844 / DSM 13496 / JCM 10307 / IC-167).